We begin with the raw amino-acid sequence, 239 residues long: Myogenic factor 6 (239 aa).

The interval 28–59 is disordered; sequence PGVSPLYEGNDSPLSPGQDPVPSETGCESSGE. The bHLH domain occupies 92-143; it reads DRRKAATLRERRRLKKINEAFDALKKKTVPNPNQRLPKVEILRSAINYIEKL. The segment covering 182–196 has biased composition (polar residues); the sequence is CQSWQENPDHSSSQM. Residues 182–239 form a disordered region; it reads CQSWQENPDHSSSQMAGHREGAVLESSESSSLRRLSSIVDSISTEEPKARCPSQISEK. The span at 204-223 shows a compositional bias: low complexity; it reads VLESSESSSLRRLSSIVDSI.

In terms of assembly, efficient DNA binding requires dimerization with another bHLH protein.

It localises to the nucleus. Functionally, involved in muscle differentiation (myogenic factor). Induces fibroblasts to differentiate into myoblasts. Probable sequence specific DNA-binding protein. The chain is Myogenic factor 6 (myf6) from Danio rerio (Zebrafish).